An 82-amino-acid chain; its full sequence is Sec-independent protein translocase protein TatA (82 aa).

The chain crosses the membrane as a helical span at residues 1–21; sequence MGGISIWQLLIIAVIIVLLFG. A disordered region spans residues 48 to 82; that stretch reads SAKDAKKDADFVPQNLEKKEAETVEKQKQNDKEQA.

It belongs to the TatA/E family. The Tat system comprises two distinct complexes: a TatABC complex, containing multiple copies of TatA, TatB and TatC subunits, and a separate TatA complex, containing only TatA subunits. Substrates initially bind to the TatABC complex, which probably triggers association of the separate TatA complex to form the active translocon.

The protein localises to the cell inner membrane. Functionally, part of the twin-arginine translocation (Tat) system that transports large folded proteins containing a characteristic twin-arginine motif in their signal peptide across membranes. TatA could form the protein-conducting channel of the Tat system. This chain is Sec-independent protein translocase protein TatA, found in Aliivibrio salmonicida (strain LFI1238) (Vibrio salmonicida (strain LFI1238)).